The following is a 412-amino-acid chain: Glucose-1-phosphate adenylyltransferase (412 aa).

Alpha-D-glucose 1-phosphate-binding positions include glycine 169, 184 to 185, and serine 201; that span reads EK.

The protein belongs to the bacterial/plant glucose-1-phosphate adenylyltransferase family. As to quaternary structure, homotetramer.

The catalysed reaction is alpha-D-glucose 1-phosphate + ATP + H(+) = ADP-alpha-D-glucose + diphosphate. It participates in glycan biosynthesis; glycogen biosynthesis. In terms of biological role, involved in the biosynthesis of ADP-glucose, a building block required for the elongation reactions to produce glycogen. Catalyzes the reaction between ATP and alpha-D-glucose 1-phosphate (G1P) to produce pyrophosphate and ADP-Glc. The sequence is that of Glucose-1-phosphate adenylyltransferase from Geobacter metallireducens (strain ATCC 53774 / DSM 7210 / GS-15).